A 468-amino-acid chain; its full sequence is ATP synthase subunit beta 1 (468 aa).

Position 151–158 (151–158 (GGAGVGKT)) interacts with ATP.

It belongs to the ATPase alpha/beta chains family. In terms of assembly, F-type ATPases have 2 components, CF(1) - the catalytic core - and CF(0) - the membrane proton channel. CF(1) has five subunits: alpha(3), beta(3), gamma(1), delta(1), epsilon(1). CF(0) has three main subunits: a(1), b(2) and c(9-12). The alpha and beta chains form an alternating ring which encloses part of the gamma chain. CF(1) is attached to CF(0) by a central stalk formed by the gamma and epsilon chains, while a peripheral stalk is formed by the delta and b chains.

Its subcellular location is the cell inner membrane. It catalyses the reaction ATP + H2O + 4 H(+)(in) = ADP + phosphate + 5 H(+)(out). Produces ATP from ADP in the presence of a proton gradient across the membrane. The catalytic sites are hosted primarily by the beta subunits. In Photobacterium profundum (strain SS9), this protein is ATP synthase subunit beta 1.